Here is a 253-residue protein sequence, read N- to C-terminus: Phosphoadenosine 5'-phosphosulfate reductase (253 aa).

The active-site Nucleophile; cysteine thiosulfonate intermediate is cysteine 242.

The protein belongs to the PAPS reductase family. CysH subfamily.

It is found in the cytoplasm. The catalysed reaction is [thioredoxin]-disulfide + sulfite + adenosine 3',5'-bisphosphate + 2 H(+) = [thioredoxin]-dithiol + 3'-phosphoadenylyl sulfate. Its pathway is sulfur metabolism; hydrogen sulfide biosynthesis; sulfite from sulfate: step 3/3. Functionally, catalyzes the formation of sulfite from phosphoadenosine 5'-phosphosulfate (PAPS) using thioredoxin as an electron donor. This is Phosphoadenosine 5'-phosphosulfate reductase from Vibrio cholerae serotype O1 (strain ATCC 39541 / Classical Ogawa 395 / O395).